The sequence spans 254 residues: Protein GVQW3 (254 aa).

This chain is Protein GVQW3, found in Homo sapiens (Human).